A 154-amino-acid polypeptide reads, in one-letter code: MAARMLGLCGRRLLAVAATRGLPAARVRWESSSSRAVIAPSTLAGKRPSEPTLRWQEDPEPEDENLYEKNPDSHGYDKDPAVDIWNMRVVFFFGFSIVLVLGSTFVAYLPDYRMQEWARREAERLVKYREAHGLPIMESNCFDPSKIQLPEDED.

The N-terminal 29 residues, 1–29 (MAARMLGLCGRRLLAVAATRGLPAARVRW), are a transit peptide targeting the mitochondrion. Residues 40-77 (PSTLAGKRPSEPTLRWQEDPEPEDENLYEKNPDSHGYD) form a disordered region. The segment covering 66–77 (LYEKNPDSHGYD) has biased composition (basic and acidic residues). Residues 89–109 (VVFFFGFSIVLVLGSTFVAYL) form a helical membrane-spanning segment.

The protein belongs to the complex I NDUFB11 subunit family. Complex I is composed of 45 different subunits. Interacts with BCAP31.

The protein localises to the mitochondrion inner membrane. In terms of biological role, accessory subunit of the mitochondrial membrane respiratory chain NADH dehydrogenase (Complex I), that is believed not to be involved in catalysis. Complex I functions in the transfer of electrons from NADH to the respiratory chain. The immediate electron acceptor for the enzyme is believed to be ubiquinone. The sequence is that of NADH dehydrogenase [ubiquinone] 1 beta subcomplex subunit 11, mitochondrial (NDUFB11) from Bos taurus (Bovine).